Here is a 139-residue protein sequence, read N- to C-terminus: Invertebrate-type lysozyme 3 (139 aa).

The N-terminal stretch at 1–18 (MFVKSLVFLTIAVAYASA) is a signal peptide. The I-type lysozyme domain occupies 19–138 (DCLHCICMRE…WNGIKSCCGC (120 aa)). Cystine bridges form between C20–C106, C23–C138, C25–C31, C36–C45, C58–C86, C76–C82, and C98–C120. E28 (proton donor) is an active-site residue. Catalysis depends on D39, which acts as the Nucleophile. Residue 51-57 (KLPYYED) coordinates substrate. Substrate-binding positions include Y90 and 113–115 (HNG).

Belongs to the glycosyl hydrolase 22 family. Type-I lysozyme subfamily. As to expression, expressed in pharynx grinder muscle pm7, isthmus marginal cell mc2 and pharyngeal muscle cell pm5, intestinal cells and at lower levels in coelomocytes and epidermis. Expressed at low levels in intestine.

The protein localises to the late endosome lumen. The protein resides in the recycling endosome lumen. It localises to the lysosome lumen. It is found in the secreted. It carries out the reaction Hydrolysis of (1-&gt;4)-beta-linkages between N-acetylmuramic acid and N-acetyl-D-glucosamine residues in a peptidoglycan and between N-acetyl-D-glucosamine residues in chitodextrins.. In terms of biological role, has bacteriolytic activity against Gram-positive bacteria. Plays a role in defense against bacterial pathogens. Involved in pharyngeal grinder function by enabling proper lysis of ingested bacteria. The chain is Invertebrate-type lysozyme 3 from Caenorhabditis elegans.